The sequence spans 336 residues: Holliday junction branch migration complex subunit RuvB (336 aa).

Residues 2 to 186 form a large ATPase domain (RuvB-L) region; the sequence is QDQEEERMIT…FGVICKLELY (185 aa). ATP-binding positions include leucine 25, arginine 26, glycine 67, lysine 70, threonine 71, threonine 72, 133-135, arginine 176, tyrosine 186, and arginine 223; that span reads EDF. Mg(2+) is bound at residue threonine 71. A small ATPAse domain (RuvB-S) region spans residues 187-257; the sequence is NNKQLTAIVK…VAEEALILLE (71 aa). The segment at 260–336 is head domain (RuvB-H); the sequence is SLGLDNTDKK…YEHFNIPSAE (77 aa). Residues arginine 296, arginine 315, and arginine 320 each coordinate DNA.

The protein belongs to the RuvB family. As to quaternary structure, homohexamer. Forms an RuvA(8)-RuvB(12)-Holliday junction (HJ) complex. HJ DNA is sandwiched between 2 RuvA tetramers; dsDNA enters through RuvA and exits via RuvB. An RuvB hexamer assembles on each DNA strand where it exits the tetramer. Each RuvB hexamer is contacted by two RuvA subunits (via domain III) on 2 adjacent RuvB subunits; this complex drives branch migration. In the full resolvosome a probable DNA-RuvA(4)-RuvB(12)-RuvC(2) complex forms which resolves the HJ.

Its subcellular location is the cytoplasm. It catalyses the reaction ATP + H2O = ADP + phosphate + H(+). Functionally, the RuvA-RuvB-RuvC complex processes Holliday junction (HJ) DNA during genetic recombination and DNA repair, while the RuvA-RuvB complex plays an important role in the rescue of blocked DNA replication forks via replication fork reversal (RFR). RuvA specifically binds to HJ cruciform DNA, conferring on it an open structure. The RuvB hexamer acts as an ATP-dependent pump, pulling dsDNA into and through the RuvAB complex. RuvB forms 2 homohexamers on either side of HJ DNA bound by 1 or 2 RuvA tetramers; 4 subunits per hexamer contact DNA at a time. Coordinated motions by a converter formed by DNA-disengaged RuvB subunits stimulates ATP hydrolysis and nucleotide exchange. Immobilization of the converter enables RuvB to convert the ATP-contained energy into a lever motion, pulling 2 nucleotides of DNA out of the RuvA tetramer per ATP hydrolyzed, thus driving DNA branch migration. The RuvB motors rotate together with the DNA substrate, which together with the progressing nucleotide cycle form the mechanistic basis for DNA recombination by continuous HJ branch migration. Branch migration allows RuvC to scan DNA until it finds its consensus sequence, where it cleaves and resolves cruciform DNA. The sequence is that of Holliday junction branch migration complex subunit RuvB from Alkaliphilus metalliredigens (strain QYMF).